A 616-amino-acid chain; its full sequence is Chaperone protein HscA (616 aa).

Belongs to the heat shock protein 70 family.

Chaperone involved in the maturation of iron-sulfur cluster-containing proteins. Has a low intrinsic ATPase activity which is markedly stimulated by HscB. Involved in the maturation of IscU. The sequence is that of Chaperone protein HscA from Escherichia coli O6:H1 (strain CFT073 / ATCC 700928 / UPEC).